A 130-amino-acid chain; its full sequence is Small ribosomal subunit protein uS8 (130 aa).

It belongs to the universal ribosomal protein uS8 family. Part of the 30S ribosomal subunit. Contacts proteins S5 and S12.

Functionally, one of the primary rRNA binding proteins, it binds directly to 16S rRNA central domain where it helps coordinate assembly of the platform of the 30S subunit. In Neisseria meningitidis serogroup C (strain 053442), this protein is Small ribosomal subunit protein uS8.